The primary structure comprises 485 residues: Cobyric acid synthase (485 aa).

One can recognise a GATase cobBQ-type domain in the interval 248-435; sequence RLKVAVAVPP…LHGLFESPAA (188 aa). The active-site Nucleophile is cysteine 329. The active site involves histidine 427.

Belongs to the CobB/CobQ family. CobQ subfamily.

It functions in the pathway cofactor biosynthesis; adenosylcobalamin biosynthesis. Functionally, catalyzes amidations at positions B, D, E, and G on adenosylcobyrinic A,C-diamide. NH(2) groups are provided by glutamine, and one molecule of ATP is hydrogenolyzed for each amidation. The protein is Cobyric acid synthase of Azotobacter vinelandii (strain DJ / ATCC BAA-1303).